The sequence spans 604 residues: MSFSGEMANGKTDVANSGFSSSPEDMSGAEEGKENSSGIEVEASDVSLSLTGDETGTTQAESRDTCSETSGEDKDSDSMDDTGHYSINDENRGNDQSHSEDEEEEEEEEEDEEEEEAVRHRKRAQRKRANRDQDSSDEERALEDWVLSEKTPLPRPRWRALRALRQRQMGSSTRFIYDACGARGFVQRFRLLHGLDGHSGCVNTLHFNQRGTWLASGSDDLKVVVWDWVRRKPVLEFESGHKSNVFQAKFLPNSGDSTLAMCARDGQVRVAELSATHCCKNTKRVAQHKGASHKLALERDSPCTFLSAGEDAVVFTIDLRQDRPASRLVVTKEKEKKVGLYTIYVNPANTYQFAVGGRDQFVRIYDQRKINENVNNGVLKKFCPHHLVTSEAKANITCLVYSHDGSELLASYNDEDIYLFNSSHSDGAEYIKRYKGHRNNATVKGVNFYGPRSEFVVSGSDCGHIFLWEKSSCQIVQFMDGDKGGVVNCLEPHPHLPVLATSGLDYDVKIWLPTAKEPTELNGLKEVIKKNKRERDEDSLHHTDLFDNHMLWFLMHHLRQRGQRRRRRDAGLGAGDADSDDSPSSSDSSDDDEDGPDRVQCIPS.

Positions 1-141 are disordered; it reads MSFSGEMANG…DQDSSDEERA (141 aa). 2 stretches are compositionally biased toward polar residues: residues 14–24 and 46–60; these read VANSGFSSSPE and VSLS…TTQA. Residues 39–50 carry the Nuclear export signal motif; the sequence is IEVEASDVSLSL. Over residues 61-99 the composition is skewed to basic and acidic residues; sequence ESRDTCSETSGEDKDSDSMDDTGHYSINDENRGNDQSHS. A compositionally biased stretch (acidic residues) spans 100-116; the sequence is EDEEEEEEEEEDEEEEE. Over residues 119–129 the composition is skewed to basic residues; that stretch reads RHRKRAQRKRA. The span at 130–141 shows a compositional bias: basic and acidic residues; that stretch reads NRDQDSSDEERA. WD repeat units lie at residues 197–236, 240–281, 287–327, 335–375, 391–430, 438–478, and 482–522; these read GHSG…PVLE, GHKS…CCKN, QHKG…PASR, EKKV…ENVN, EAKA…GAEY, RNNA…IVQF, and DKGG…TELN. Positions 564–604 are disordered; sequence RRRRRDAGLGAGDADSDDSPSSSDSSDDDEDGPDRVQCIPS.

Belongs to the WD repeat DCAF8 family.

The protein localises to the nucleus. Its subcellular location is the cytoplasm. In Xenopus tropicalis (Western clawed frog), this protein is DDB1- and CUL4-associated factor 8 (dcaf8).